The sequence spans 104 residues: Guanidinium exporter (104 aa).

Residues 1–3 (MSW) are Cytoplasmic-facing. Residues 4–26 (IILFVAGLLEIVWAVGLKYTHGF) traverse the membrane as a helical segment. At 27-32 (TRLTPS) the chain is on the periplasmic side. Residues 33–50 (IITISAMIVSMGMLSYAM) traverse the membrane as a helical segment. Residues 51-54 (KGLP) are Cytoplasmic-facing. The helical transmembrane segment at 55 to 77 (AGTAYAIWTGIGAVGTAIFGIIV) threads the bilayer. The Periplasmic portion of the chain corresponds to 78 to 83 (FGESAN). A helical membrane pass occupies residues 84–103 (IYRLLSLAMIVFGIIGLKLA). A topological domain (cytoplasmic) is located at residue S104.

The protein belongs to the drug/metabolite transporter (DMT) superfamily. Small multidrug resistance (SMR) (TC 2.A.7.1) family. Gdx/SugE subfamily.

It is found in the cell inner membrane. In terms of biological role, guanidinium ion exporter. Couples guanidinium export to the proton motive force, exchanging one guanidinium ion for two protons. The chain is Guanidinium exporter from Proteus vulgaris.